A 151-amino-acid chain; its full sequence is Ribosome maturation factor RimP (151 aa).

Belongs to the RimP family.

It localises to the cytoplasm. Functionally, required for maturation of 30S ribosomal subunits. The sequence is that of Ribosome maturation factor RimP from Shewanella denitrificans (strain OS217 / ATCC BAA-1090 / DSM 15013).